The following is a 233-amino-acid chain: 3,4-dihydroxy-2-butanone 4-phosphate synthase (233 aa).

Residue E37 coordinates Mg(2+). E37 is a Mn(2+) binding site. D41 is a binding site for D-ribulose 5-phosphate. C66 is subject to S-glutathionyl cysteine. Residues T92 and 150-154 (RRGHT) contribute to the D-ribulose 5-phosphate site. H153 contacts Mg(2+). H153 contacts Mn(2+).

As to quaternary structure, homodimer. Mg(2+) is required as a cofactor. It depends on Mn(2+) as a cofactor. In terms of processing, S-glutathionylation is reversible and dependent on a glutaredoxin.

The catalysed reaction is D-ribulose 5-phosphate = (2S)-2-hydroxy-3-oxobutyl phosphate + formate + H(+). It participates in cofactor biosynthesis; riboflavin biosynthesis; 2-hydroxy-3-oxobutyl phosphate from D-ribulose 5-phosphate: step 1/1. Its function is as follows. Catalyzes the conversion of D-ribulose 5-phosphate to formate and 3,4-dihydroxy-2-butanone 4-phosphate. In Pyricularia oryzae (strain 70-15 / ATCC MYA-4617 / FGSC 8958) (Rice blast fungus), this protein is 3,4-dihydroxy-2-butanone 4-phosphate synthase (RIB3).